Reading from the N-terminus, the 252-residue chain is Diphthine synthase (252 aa).

S-adenosyl-L-methionine contacts are provided by residues L9, D85, V88, 113 to 114, L165, A204, and H229; that span reads SI.

Belongs to the diphthine synthase family. In terms of assembly, homodimer.

The catalysed reaction is 2-[(3S)-amino-3-carboxypropyl]-L-histidyl-[translation elongation factor 2] + 3 S-adenosyl-L-methionine = diphthine-[translation elongation factor 2] + 3 S-adenosyl-L-homocysteine + 3 H(+). Its pathway is protein modification; peptidyl-diphthamide biosynthesis. In terms of biological role, S-adenosyl-L-methionine-dependent methyltransferase that catalyzes the trimethylation of the amino group of the modified target histidine residue in translation elongation factor 2 (EF-2), to form an intermediate called diphthine. The three successive methylation reactions represent the second step of diphthamide biosynthesis. The chain is Diphthine synthase from Methanocorpusculum labreanum (strain ATCC 43576 / DSM 4855 / Z).